Here is a 270-residue protein sequence, read N- to C-terminus: MSNVRSDKPFVLAGRTFQSRLLVGTGKYRDMEETRLATEASGAEIVTVAVRRTNLGQNAGEPNLLDVLSPEKYTILPNTAGCFDAVEAVRTCRLARELLDGYKSHENRTLVKLEVLADQKTLFPNVIETLKAAEVLVKDGFDVMVYTSDDPIIARQLAEAGCIAVMPLAGLIGTGLGICNPYNLQIILEESKVPVLVDAGVGTASDATIAMEMGCEAVLMNSAIAHAQQPVLMAEAMKHAILAGRMAYLAGRMPKKLYASASSPLEGLIK.

Lys-112 serves as the catalytic Schiff-base intermediate with DXP. 1-deoxy-D-xylulose 5-phosphate is bound by residues Gly-173, 199–200 (AG), and 221–222 (NS).

It belongs to the ThiG family. In terms of assembly, homotetramer. Forms heterodimers with either ThiH or ThiS.

The protein resides in the cytoplasm. It carries out the reaction [ThiS sulfur-carrier protein]-C-terminal-Gly-aminoethanethioate + 2-iminoacetate + 1-deoxy-D-xylulose 5-phosphate = [ThiS sulfur-carrier protein]-C-terminal Gly-Gly + 2-[(2R,5Z)-2-carboxy-4-methylthiazol-5(2H)-ylidene]ethyl phosphate + 2 H2O + H(+). It participates in cofactor biosynthesis; thiamine diphosphate biosynthesis. In terms of biological role, catalyzes the rearrangement of 1-deoxy-D-xylulose 5-phosphate (DXP) to produce the thiazole phosphate moiety of thiamine. Sulfur is provided by the thiocarboxylate moiety of the carrier protein ThiS. In vitro, sulfur can be provided by H(2)S. The protein is Thiazole synthase of Pseudomonas entomophila (strain L48).